Reading from the N-terminus, the 893-residue chain is MADTTVDKLATEVGKSTDRLVEQFSQAGIKKSANDTVSESEKQQLLDFLKKQHGGDAAPTKMTLQRKSVSTLSVAGSGGQSKDVKVEVRKKRTFVKRDEAAEAELAAAAKAEEAKAAEVAKTAAEAKAKLDAEAKAKAKADAEAKAKAKVLTEKPVQESAEDKAAKAEEAKLLAAQDAAAKSKADEDVAAAAEVARRLAEENEKRWAEEEKARKEAEKTVDHHVTTSTEARAAEDTADANAEKRGRRPRKPSANAGNNANANAGAGKPGGKGKRGKDNRRDSRNSRNSRNNRSVAPESMDHAFTKPAAVVKADVSIGETVSVSELASKMSIKATEIIKQMMKMGSMVTINQVLDQETAQLVAEEMGHKVVLTRENELEHQVLADRNGDVLAESRAPVVTIMGHVDHGKTSLLDYIRRAKVASGEAGGITQHIGAYHVETENGMITFLDTPGHAAFTAMRARGAKATDIVILVVAADDGVMPQTIEAIQHAKAGGVPLIVAVNKMDKPEADPDRVKSELSQHGVMSEDWGGNNMFVNVSAKTGAGIDELLEGILLEAEVLELKAIKEGMAAGVVVESKLDKGRGPVATVLVQEGTLKQGDIVLCGLEYGKVRAMRDENGKAITEAGPSIPVEILGLSGVPSAGDEATVVRDERKAREVALYRQGKFRDVKLARQQKSKLENMFANMTEGEVEELNIVLKADVQGSLEAICDSLNALSTAEVKVNIIARGVGGLTETDATLAAASNAIMVGFNVRADAQARKVVESESVDLRYYSIIYQLIDEVRDAMSGLLAPEFKQEIIGLAEVRDVFKSPKIGAIAGCMVTEGTIKRSAPIRVLRDNIVIYEGELESLRRFKDDVSDVRNGMECGIGVKNYNDVRVGDQIEVFETVEIARTL.

Disordered stretches follow at residues 135–169 (KAKA…KAEE) and 201–300 (ENEK…ESMD). Residues 201-224 (ENEKRWAEEEKARKEAEKTVDHHV) show a composition bias toward basic and acidic residues. The span at 251–265 (PSANAGNNANANAGA) shows a compositional bias: low complexity. The tr-type G domain occupies 393 to 562 (SRAPVVTIMG…LLEAEVLELK (170 aa)). The tract at residues 402–409 (GHVDHGKT) is G1. Position 402–409 (402–409 (GHVDHGKT)) interacts with GTP. A G2 region spans residues 427–431 (GITQH). Residues 448–451 (DTPG) are G3. Residues 448–452 (DTPGH) and 502–505 (NKMD) each bind GTP. The G4 stretch occupies residues 502–505 (NKMD). Positions 538-540 (SAK) are G5.

It belongs to the TRAFAC class translation factor GTPase superfamily. Classic translation factor GTPase family. IF-2 subfamily.

The protein resides in the cytoplasm. One of the essential components for the initiation of protein synthesis. Protects formylmethionyl-tRNA from spontaneous hydrolysis and promotes its binding to the 30S ribosomal subunits. Also involved in the hydrolysis of GTP during the formation of the 70S ribosomal complex. The chain is Translation initiation factor IF-2 from Shewanella halifaxensis (strain HAW-EB4).